A 122-amino-acid chain; its full sequence is Aspartate 1-decarboxylase (122 aa).

Ser25 acts as the Schiff-base intermediate with substrate; via pyruvic acid in catalysis. Residue Ser25 is modified to Pyruvic acid (Ser). Thr57 lines the substrate pocket. Catalysis depends on Tyr58, which acts as the Proton donor. Residue 73-75 coordinates substrate; the sequence is GAA.

It belongs to the PanD family. As to quaternary structure, heterooctamer of four alpha and four beta subunits. Pyruvate is required as a cofactor. Post-translationally, is synthesized initially as an inactive proenzyme, which is activated by self-cleavage at a specific serine bond to produce a beta-subunit with a hydroxyl group at its C-terminus and an alpha-subunit with a pyruvoyl group at its N-terminus.

It localises to the cytoplasm. The catalysed reaction is L-aspartate + H(+) = beta-alanine + CO2. Its pathway is cofactor biosynthesis; (R)-pantothenate biosynthesis; beta-alanine from L-aspartate: step 1/1. Catalyzes the pyruvoyl-dependent decarboxylation of aspartate to produce beta-alanine. This Bordetella pertussis (strain Tohama I / ATCC BAA-589 / NCTC 13251) protein is Aspartate 1-decarboxylase.